The following is a 217-amino-acid chain: MNQSLLTQFGDPFERVERALRSLRNGNGVLVTDDENRENEGDLIFPAQTLNEVQMAMLIRECSGIVCLCLTDEKVRSLGLPMMVENNSSRFKTAFTVTIEAAHGVTTGVSAADRVKTVKTAVAENAKPEDLNRPGHVFPLRACPGGVLERQGHTEATVDLMKLAGLQPYGVLCELTNIDGTMARLPEVVTFANKNNIPVVTIDDLIMYRKQHQKKVS.

D-ribulose 5-phosphate contacts are provided by residues Arg37–Glu38, Asp42, Arg150–Thr154, and Glu174. Glu38 is a binding site for Mg(2+). A Mg(2+)-binding site is contributed by His153.

Belongs to the DHBP synthase family. In terms of assembly, homodimer. It depends on Mg(2+) as a cofactor. Mn(2+) is required as a cofactor.

It carries out the reaction D-ribulose 5-phosphate = (2S)-2-hydroxy-3-oxobutyl phosphate + formate + H(+). Its pathway is cofactor biosynthesis; riboflavin biosynthesis; 2-hydroxy-3-oxobutyl phosphate from D-ribulose 5-phosphate: step 1/1. Its function is as follows. Catalyzes the conversion of D-ribulose 5-phosphate to formate and 3,4-dihydroxy-2-butanone 4-phosphate. The sequence is that of 3,4-dihydroxy-2-butanone 4-phosphate synthase from Desulforamulus reducens (strain ATCC BAA-1160 / DSM 100696 / MI-1) (Desulfotomaculum reducens).